A 912-amino-acid chain; its full sequence is Multiple C2 and transmembrane domain-containing protein (912 aa).

Over residues 1 to 33 the composition is skewed to low complexity; it reads MSRIQYVDQVDQVELDQQQQPGSSSTVSGSTPP. Disordered regions lie at residues 1–80 and 145–165; these read MSRI…KRAK and SSEG…IGGS. The segment covering 38–49 has biased composition (polar residues); that stretch reads PHGSPSLQQSQR. C2 domains lie at 218–337, 371–493, and 522–637; these read QANE…HLQL, RNSK…HLML, and ERYK…TLKD. Positions 252, 258, 305, 307, and 313 each coordinate Ca(2+). Ca(2+)-binding residues include aspartate 553, aspartate 559, aspartate 605, and aspartate 607. The next 2 helical transmembrane spans lie at 729-749 and 826-846; these read IVAC…LIIL and LTWL…FVPL. The disordered stretch occupies residues 887–912; the sequence is NQYRELPPSAPTDQTRNNPKKKLKGS.

The cofactor is Ca(2+). Motor neurons (at protein level).

It is found in the endoplasmic reticulum membrane. Calcium sensor which is essential for the stabilization of normal baseline neurotransmitter release and for the induction and long-term maintenance of presynaptic homeostatic plasticity. The chain is Multiple C2 and transmembrane domain-containing protein from Drosophila melanogaster (Fruit fly).